The sequence spans 1182 residues: WD repeat-containing protein on Y chromosome (1182 aa).

8 WD repeats span residues 155-199 (EEIT…LRSA), 323-362 (RIPLGVSVFYVSEIKNILVTGGPDTFVRIWDVYISSEPSA), 366-405 (GHNGGIVAVFVQPEENKVYSVDYHKIIKVWDLQEHTLLQT), 456-495 (THAAPVSVVLYNRLFRNIVTCGLDSYIIVWDPWTGRRKII), 508-547 (TIDIEITAACFDPLEQFLLTGARDGSLKIWNYNNAVVVRN), 595-635 (FHTD…RRYN), 740-779 (KTGDCVLTMATDRKNRFLYTGTAFGYIKVWHIVNYCIPKA), and 823-862 (GHLKAINSIGFINLPKIIFSGSHDYSCRLWTQGGRYLGTL). The tract at residues 1031-1182 (TKAGANLDQP…PKAKTDRETH (152 aa)) is disordered. Composition is skewed to low complexity over residues 1079–1092 (GVSSGYGKVSVSQG) and 1103–1121 (TTSLSKPKTSSSPSKPKGS).

The protein is WD repeat-containing protein on Y chromosome of Drosophila virilis (Fruit fly).